We begin with the raw amino-acid sequence, 163 residues long: Transcriptional repressor NrdR (163 aa).

A zinc finger spans residues 3–34 (CPSCNSESSRVVDSRSIEMGVSIRRRRECSEC). The ATP-cone domain occupies 46–136 (LLVVKRNGVT…VYKSFNCAED (91 aa)).

The protein belongs to the NrdR family. The cofactor is Zn(2+).

Functionally, negatively regulates transcription of bacterial ribonucleotide reductase nrd genes and operons by binding to NrdR-boxes. The polypeptide is Transcriptional repressor NrdR (Corynebacterium jeikeium (strain K411)).